Consider the following 264-residue polypeptide: Acyl-[acyl-carrier-protein]--UDP-N-acetylglucosamine O-acyltransferase (264 aa).

This sequence belongs to the transferase hexapeptide repeat family. LpxA subfamily. As to quaternary structure, homotrimer.

Its subcellular location is the cytoplasm. It carries out the reaction a (3R)-hydroxyacyl-[ACP] + UDP-N-acetyl-alpha-D-glucosamine = a UDP-3-O-[(3R)-3-hydroxyacyl]-N-acetyl-alpha-D-glucosamine + holo-[ACP]. The protein operates within glycolipid biosynthesis; lipid IV(A) biosynthesis; lipid IV(A) from (3R)-3-hydroxytetradecanoyl-[acyl-carrier-protein] and UDP-N-acetyl-alpha-D-glucosamine: step 1/6. Its function is as follows. Involved in the biosynthesis of lipid A, a phosphorylated glycolipid that anchors the lipopolysaccharide to the outer membrane of the cell. This Rickettsia africae (strain ESF-5) protein is Acyl-[acyl-carrier-protein]--UDP-N-acetylglucosamine O-acyltransferase.